A 223-amino-acid chain; its full sequence is Endonuclease V (223 aa).

Mg(2+) is bound by residues D45 and D113.

Belongs to the endonuclease V family. The cofactor is Mg(2+).

It is found in the cytoplasm. The catalysed reaction is Endonucleolytic cleavage at apurinic or apyrimidinic sites to products with a 5'-phosphate.. In terms of biological role, DNA repair enzyme involved in the repair of deaminated bases. Selectively cleaves double-stranded DNA at the second phosphodiester bond 3' to a deoxyinosine leaving behind the intact lesion on the nicked DNA. This chain is Endonuclease V, found in Dehalococcoides mccartyi (strain ATCC BAA-2100 / JCM 16839 / KCTC 5957 / BAV1).